The following is a 1183-amino-acid chain: DNA-directed RNA polymerase subunit beta (1183 aa).

The protein belongs to the RNA polymerase beta chain family. In terms of assembly, the RNAP catalytic core consists of 2 alpha, 1 beta, 1 beta' and 1 omega subunit. When a sigma factor is associated with the core the holoenzyme is formed, which can initiate transcription.

The enzyme catalyses RNA(n) + a ribonucleoside 5'-triphosphate = RNA(n+1) + diphosphate. Its function is as follows. DNA-dependent RNA polymerase catalyzes the transcription of DNA into RNA using the four ribonucleoside triphosphates as substrates. The protein is DNA-directed RNA polymerase subunit beta of Staphylococcus aureus (strain JH9).